The following is a 288-amino-acid chain: Putative N-terminal acetyltransferase 2 (288 aa).

The segment at 68–90 is disordered; sequence TEEKSSQFDENKSKSNNGKKNEP.

Heterooligomeric.

It localises to the cytoplasm. In terms of biological role, maybe involved in N-terminal acetylation of proteins. N-acetylation plays a role in normal eukaryotic translation and processing, protect against proteolytic degradation and protein turnover. This is Putative N-terminal acetyltransferase 2 (NAT2) from Saccharomyces cerevisiae (strain ATCC 204508 / S288c) (Baker's yeast).